The sequence spans 181 residues: Acireductone dioxygenase (181 aa).

Histidine 97, histidine 99, glutamate 103, and histidine 141 together coordinate Fe(2+). Ni(2+)-binding residues include histidine 97, histidine 99, glutamate 103, and histidine 141.

This sequence belongs to the acireductone dioxygenase (ARD) family. As to quaternary structure, monomer. Fe(2+) is required as a cofactor. The cofactor is Ni(2+).

It catalyses the reaction 1,2-dihydroxy-5-(methylsulfanyl)pent-1-en-3-one + O2 = 3-(methylsulfanyl)propanoate + CO + formate + 2 H(+). The enzyme catalyses 1,2-dihydroxy-5-(methylsulfanyl)pent-1-en-3-one + O2 = 4-methylsulfanyl-2-oxobutanoate + formate + 2 H(+). It functions in the pathway amino-acid biosynthesis; L-methionine biosynthesis via salvage pathway; L-methionine from S-methyl-5-thio-alpha-D-ribose 1-phosphate: step 5/6. Functionally, catalyzes 2 different reactions between oxygen and the acireductone 1,2-dihydroxy-3-keto-5-methylthiopentene (DHK-MTPene) depending upon the metal bound in the active site. Fe-containing acireductone dioxygenase (Fe-ARD) produces formate and 2-keto-4-methylthiobutyrate (KMTB), the alpha-ketoacid precursor of methionine in the methionine recycle pathway. Ni-containing acireductone dioxygenase (Ni-ARD) produces methylthiopropionate, carbon monoxide and formate, and does not lie on the methionine recycle pathway. The chain is Acireductone dioxygenase from Pseudomonas syringae pv. syringae (strain B728a).